The primary structure comprises 160 residues: Serine-protein kinase RsbW (160 aa).

It belongs to the anti-sigma-factor family.

The enzyme catalyses L-seryl-[protein] + ATP = O-phospho-L-seryl-[protein] + ADP + H(+). It carries out the reaction L-threonyl-[protein] + ATP = O-phospho-L-threonyl-[protein] + ADP + H(+). Functionally, negative regulator of sigma-B activity. Phosphorylates and inactivates its specific antagonist protein, RsbV. Upon phosphorylation of RsbV, RsbW is released and binds to sigma-B, thereby blocking its ability to form an RNA polymerase holoenzyme (E-sigma-B). This Bacillus mycoides (strain KBAB4) (Bacillus weihenstephanensis) protein is Serine-protein kinase RsbW.